The following is a 220-amino-acid chain: MDNNDQISNLCLGALQLLADQPISVISNEPSEEQRNEHVLKKWENNVLRHWKILFSLFMQTCGDSVQGNAAFSILNFMTTNSLVGQLYQRLYDESNSLGFISSPLNETEHLSEENLKIESSITFTSEEIEKEKENIKSVLLPSVQSISSSLELYASKESDYRSSIEGVLADLKLARARWEIVRNVTQILLLESGISFLENKKLAYIMDLCGDREDNYSSY.

It belongs to the CENP-H/MCM16 family. Component of the inner kinetochore constitutive centromere-associated network (CCAN) (also known as central kinetochore Sim4 complex in fission yeast), which is composed of at least cnl2, cnp3, cnp20, fta1, fta2, fta3, fta4, fta6, fta7, mal2, mhf1, mhf2, mis6, mis15, mis17, sim4 and wip1.

It localises to the nucleus. It is found in the chromosome. The protein localises to the centromere. The protein resides in the kinetochore. In terms of biological role, component of the kinetochore, a multiprotein complex that assembles on centromeric DNA and attaches chromosomes to spindle microtubules, mediating chromosome segregation and sister chromatid segregation during meiosis and mitosis. Component of the inner kinetochore constitutive centromere-associated network (CCAN), which serves as a structural platform for outer kinetochore assembly. Fta2, fta3 and fta4 associate with the central core (cnt) and inner repeat (inr) region of the centromere. This chain is Inner kinetochore subunit fta3 (fta3), found in Schizosaccharomyces pombe (strain 972 / ATCC 24843) (Fission yeast).